The primary structure comprises 216 residues: Ras-related protein Rab-2B (216 aa).

Positions 16, 17, 18, 19, 20, and 21 each coordinate GDP. Positions 16, 17, 18, 19, 20, 21, and 38 each coordinate GTP. Ser-20 contacts Mg(2+). The Switch 1 signature appears at 37–42 (LTIGVE). Thr-38 and Asp-61 together coordinate Mg(2+). The Switch 2 motif lies at 63–72 (AGQESFRSIT). 6 residues coordinate GTP: Gly-64, Asn-119, Lys-120, Asp-122, Ala-150, and Lys-151. Asn-119 lines the GDP pocket. Asp-122, Ala-150, and Lys-151 together coordinate GDP. Positions 189 to 216 (PQQSISTSVGPSASQRNSRDIGSNSGCC) are disordered. Phosphoserine is present on Ser-202. 2 S-geranylgeranyl cysteine lipidation sites follow: Cys-215 and Cys-216.

This sequence belongs to the small GTPase superfamily. Rab family. As to quaternary structure, interacts (in GTP-bound form) with GARIN4 (via N-terminus). Interacts (in GTP-bound form) with GARIN5A. Interacts (in GTP-bound form) with GARIN1B. Interacts with VPS39 and VPS41. The cofactor is Mg(2+). Expressed in kidney, prostate, lung, liver, thymus, colon, pancreas, and skeletal muscle, and low levels in placenta. Not detected in heart, brain, spleen, testis, ovary, small intestine and leukocyte.

It localises to the cell membrane. It is found in the endoplasmic reticulum membrane. The protein resides in the golgi apparatus membrane. Its subcellular location is the cytoplasmic vesicle. The protein localises to the secretory vesicle. It localises to the acrosome. It is found in the autophagosome membrane. The enzyme catalyses GTP + H2O = GDP + phosphate + H(+). Its activity is regulated as follows. Regulated by guanine nucleotide exchange factors (GEFs) which promote the exchange of bound GDP for free GTP, GTPase activating proteins (GAPs) which increase the GTP hydrolysis activity, and GDP dissociation inhibitors (GDIs) which inhibit the dissociation of the nucleotide from the GTPase. Its function is as follows. The small GTPases Rab are key regulators of intracellular membrane trafficking, from the formation of transport vesicles to their fusion with membranes. Rabs cycle between active GTP-bound and inactive GDP-bound states. In their active state, drive transport of vesicular carriers from donor organelles to acceptor organelles to regulate the membrane traffic that maintains organelle identity and morphology. Regulates the compacted morphology of the Golgi. Promotes cytosolic DNA-induced innate immune responses. Regulates IFN responses against DNA viruses by regulating the CGAS-STING signaling axis. Together with RAB2A redundantly required for efficient autophagic flux. This is Ras-related protein Rab-2B from Homo sapiens (Human).